The primary structure comprises 837 residues: Katanin p80 WD40 repeat-containing subunit B1 homolog KTN80.4 (837 aa).

WD repeat units follow at residues 14–54 (AHSA…AILS), 57–96 (GHSSGIDSVTFDASEVLVAAGAASGTIKLWDLEEAKIVRT), 99–138 (GHRSNCISVDFHPFGEFFASGSLDTNLKIWDIRKKGCIHT), 141–182 (GHTR…TEFK), 184–222 (HEGQIQSLDFHPHEFLLATGSADRTVKFWDLETFELIGS), 225–265 (PETA…DGVD), and 267–304 (GWSRLSDMNVHEGKLLGCSYNQSCVGVWVVDLSRTEPC). A DWD box motif is present at residues 115 to 131 (FFASGSLDTNLKIWDIR). 3 disordered regions span residues 307–328 (GDTAQSNGHPEKRSCSGRDPVV), 358–462 (GRLS…ANPV), and 501–614 (LQAA…LVIN). Polar residues-rich tracts occupy residues 376–387 (IGRSSTSQNSES) and 412–450 (TFSSTGSLPGTPHRVSSTNVSKATSGVSTAVSNAATSRR). A compositionally biased stretch (low complexity) spans 509–520 (SPSSRNNPDLPD). Basic and acidic residues-rich tracts occupy residues 553–563 (ATERSINDFRY) and 580–595 (RNHDENYDLVSHRSNR).

The protein belongs to the WD repeat KATNB1 family. In terms of assembly, component of KTN80-KTN1 complexes composed of a hexamer of KTN1-KTN80 heterodimers that sense microtubule (MT) geometry to confer precise MT severing. Interacts directly with AAA1/KTN1, and weakly with KTN80.1 and KTN80.3. In terms of tissue distribution, expressed in siliques, flowers, leaves, stems and roots.

It localises to the cytoplasm. The protein resides in the cytoskeleton. Its function is as follows. May participate in a complex which severs microtubules in an ATP-dependent manner. This activity may promote rapid reorganization of cellular microtubule arrays. Confers precision to microtubule (MT) severing by specific targeting of KTN1 to MT cleavage sites such as crossover or branching nucleation sites. Together with other KTN80s, regulates cell elongation by modulating MT organization. This is Katanin p80 WD40 repeat-containing subunit B1 homolog KTN80.4 from Arabidopsis thaliana (Mouse-ear cress).